The following is a 278-amino-acid chain: F-box only protein 17 (278 aa).

In terms of domain architecture, F-box spans 15-62; that stretch reads SLALDALPPELLVQVLSHVPPRSLVTRCRPVCRAWRDIVDGPTVWLLQ. In terms of domain architecture, FBA spans 99 to 275; that stretch reads YCLRAPFGRN…VTHSSVRVRI (177 aa).

Part of a SCF (SKP1-cullin-F-box) protein ligase complex. Interacts with SKP1 and CUL1. As to expression, expressed in heart, skeletal muscle, liver and kidney. Expressed at lower levels in spleen and brain.

Functionally, substrate-recognition component of the SCF (SKP1-CUL1-F-box protein)-type E3 ubiquitin ligase complex. Able to recognize and bind denatured glycoproteins, which are modified with complex-type oligosaccharides. Also recognizes sulfated glycans. Does not bind high-mannose glycoproteins. This is F-box only protein 17 (FBXO17) from Homo sapiens (Human).